The following is a 408-amino-acid chain: UV excision repair protein RAD23 homolog B (408 aa).

The Ubiquitin-like domain maps to 1–79 (MLVTLKTLQQ…VVVMVTKPKA (79 aa)). Low complexity predominate over residues 80-111 (VTTPAPATTQQSNSAATTTVSSSTAPAVTQAP). The tract at residues 80 to 176 (VTTPAPATTQ…TSGDSSRSNL (97 aa)) is disordered. The span at 112–122 (APAPASAPTPT) shows a compositional bias: pro residues. The span at 123-143 (PVSVTPAPTTASSEPAPASAA) shows a compositional bias: low complexity. The segment covering 144–153 (KQEKPAERPV) has biased composition (basic and acidic residues). Low complexity predominate over residues 154-174 (ETPVATTPTSTDSTSGDSSRS). Phosphothreonine is present on residues Thr155 and Thr164. Position 174 is a phosphoserine (Ser174). Position 186 is a phosphothreonine (Thr186). Residues 188–228 (QSYENMVTEIMSMGYEREQVIAALRASFNNPDRAVEYLLMG) form the UBA 1 domain. A Phosphoserine modification is found at Ser199. Tyr202 is subject to Phosphotyrosine. The disordered stretch occupies residues 236–274 (QAVVDPPPAASTGAPQSSVAAAAATTTATTTTTSSGGHP). A compositionally biased stretch (low complexity) spans 255–268 (AAAAATTTATTTTT). Residues 273–316 (HPLEFLRNQPQFQQMRQIIQQNPSLLPALLQQIGRENPQLLQQI) enclose the STI1 domain. A UBA 2 domain is found at 363 to 403 (PQEKEAIERLKALGFPEGLVIQAYFACEKNENLAANFLLQQ).

The protein belongs to the RAD23 family. Component of the XPC complex composed of XPC, RAD23B and CETN2. Interacts with NGLY1 and PSMC1. Interacts with ATXN3. Interacts with PSMD4 and PSMC5. Interacts with AMFR. Interacts with VCP; the interaction is indirect and mediated by NGLY1.

The protein localises to the nucleus. It is found in the cytoplasm. In terms of biological role, multiubiquitin chain receptor involved in modulation of proteasomal degradation. Binds to polyubiquitin chains. Proposed to be capable to bind simultaneously to the 26S proteasome and to polyubiquitinated substrates and to deliver ubiquitinated proteins to the proteasome. May play a role in endoplasmic reticulum-associated degradation (ERAD) of misfolded glycoproteins by association with PNGase and delivering deglycosylated proteins to the proteasome. Its function is as follows. Involved in global genome nucleotide excision repair (GG-NER) by acting as component of the XPC complex. Cooperatively with CETN2 appears to stabilize XPC. May protect XPC from proteasomal degradation. Functionally, the XPC complex is proposed to represent the first factor bound at the sites of DNA damage and together with other core recognition factors, XPA, RPA and the TFIIH complex, is part of the pre-incision (or initial recognition) complex. The XPC complex recognizes a wide spectrum of damaged DNA characterized by distortions of the DNA helix such as single-stranded loops, mismatched bubbles or single-stranded overhangs. The orientation of XPC complex binding appears to be crucial for inducing a productive NER. XPC complex is proposed to recognize and to interact with unpaired bases on the undamaged DNA strand which is followed by recruitment of the TFIIH complex and subsequent scanning for lesions in the opposite strand in a 5'-to-3' direction by the NER machinery. Cyclobutane pyrimidine dimers (CPDs) which are formed upon UV-induced DNA damage esacpe detection by the XPC complex due to a low degree of structural perurbation. Instead they are detected by the UV-DDB complex which in turn recruits and cooperates with the XPC complex in the respective DNA repair. In vitro, the XPC:RAD23B dimer is sufficient to initiate NER; it preferentially binds to cisplatin and UV-damaged double-stranded DNA and also binds to a variety of chemically and structurally diverse DNA adducts. XPC:RAD23B contacts DNA both 5' and 3' of a cisplatin lesion with a preference for the 5' side. XPC:RAD23B induces a bend in DNA upon binding. XPC:RAD23B stimulates the activity of DNA glycosylases TDG and SMUG1. The protein is UV excision repair protein RAD23 homolog B (RAD23B) of Bos taurus (Bovine).